The primary structure comprises 448 residues: uncharacterized protein (448 aa).

Over residues 187–198 the composition is skewed to basic and acidic residues; sequence SKGDRGDADDRG. Disordered regions lie at residues 187-221, 243-270, and 291-361; these read SKGD…LPTR, LQVP…GATM, and LSGL…LPNG. Over residues 243–261 the composition is skewed to low complexity; it reads LQVPGGTSAAIPSASSTPS. The span at 307–334 shows a compositional bias: basic and acidic residues; it reads FDERGQEVRDPADYEHSNEPDERRADDR.

It to M.tuberculosis Rv0025 and Rv0739.

This is an uncharacterized protein from Mycobacterium tuberculosis (strain ATCC 25618 / H37Rv).